Here is a 1183-residue protein sequence, read N- to C-terminus: Chromosome partition protein Smc (1183 aa).

Position 32–39 (32–39) interacts with ATP; sequence PNGCGKTN. 2 coiled-coil regions span residues 167 to 322 and 358 to 497; these read ITRY…ERLN and AEFE…ALCN. Positions 409-442 are disordered; that stretch reads KEHLEGSVNRLDQRKRDLERSMEQAEPERRRTSE. Over residues 419–442 the composition is skewed to basic and acidic residues; that stretch reads LDQRKRDLERSMEQAEPERRRTSE. The SMC hinge domain occupies 523-632; sequence LGCLSDLISV…VADLDAAEQL (110 aa). Coiled coils occupy residues 669 to 941 and 980 to 1025; these read GKKA…VMER and NELA…ALEK.

This sequence belongs to the SMC family. As to quaternary structure, homodimer.

The protein resides in the cytoplasm. In terms of biological role, required for chromosome condensation and partitioning. This is Chromosome partition protein Smc from Chlorobaculum tepidum (strain ATCC 49652 / DSM 12025 / NBRC 103806 / TLS) (Chlorobium tepidum).